The sequence spans 159 residues: MEIDVLVEDDGWSALPDAAEIAIAAARAALASLGDEVPEGAEMSITLTDDARIRVLNREWRDKDKPTNVLSFPAAELPEGVVPQPLGDVIVARETVFSEALAEDKTPAHHLAHLVVHGTLHLMGFDHEDDDEAEEMEAAERQILAGLGIDDPYALPAEG.

Zn(2+)-binding residues include histidine 117, histidine 121, and histidine 127.

This sequence belongs to the endoribonuclease YbeY family. Zn(2+) serves as cofactor.

Its subcellular location is the cytoplasm. Its function is as follows. Single strand-specific metallo-endoribonuclease involved in late-stage 70S ribosome quality control and in maturation of the 3' terminus of the 16S rRNA. The chain is Endoribonuclease YbeY from Azorhizobium caulinodans (strain ATCC 43989 / DSM 5975 / JCM 20966 / LMG 6465 / NBRC 14845 / NCIMB 13405 / ORS 571).